We begin with the raw amino-acid sequence, 132 residues long: NADPH-dependent 7-cyano-7-deazaguanine reductase (132 aa).

Cys-43 serves as the catalytic Thioimide intermediate. Catalysis depends on Asp-50, which acts as the Proton donor. Substrate contacts are provided by residues 65–67 and 84–85; these read VEL and HE.

The protein belongs to the GTP cyclohydrolase I family. QueF type 1 subfamily.

Its subcellular location is the cytoplasm. It catalyses the reaction 7-aminomethyl-7-carbaguanine + 2 NADP(+) = 7-cyano-7-deazaguanine + 2 NADPH + 3 H(+). The protein operates within tRNA modification; tRNA-queuosine biosynthesis. In terms of biological role, catalyzes the NADPH-dependent reduction of 7-cyano-7-deazaguanine (preQ0) to 7-aminomethyl-7-deazaguanine (preQ1). The sequence is that of NADPH-dependent 7-cyano-7-deazaguanine reductase from Thermosynechococcus vestitus (strain NIES-2133 / IAM M-273 / BP-1).